A 371-amino-acid chain; its full sequence is Peptidyl-prolyl cis-trans isomerase D (371 aa).

The PPIase cyclophilin-type domain maps to 8–172; that stretch reads FFDIAIGGQL…EPVVIADCGQ (165 aa). The interval 175–202 is disordered; sequence SDDPFLAERTSTDGDPYEDYPDDEDQEL. Residues 189 to 201 show a composition bias toward acidic residues; the sequence is DPYEDYPDDEDQE. TPR repeat units lie at residues 212–245, 265–303, and 308–341; these read AKTI…LDVH, APLL…LELS, and AKAY…LPED.

It belongs to the cyclophilin-type PPIase family. PPIase D subfamily.

The protein resides in the cytoplasm. It catalyses the reaction [protein]-peptidylproline (omega=180) = [protein]-peptidylproline (omega=0). PPIases accelerate the folding of proteins. It catalyzes the cis-trans isomerization of proline imidic peptide bonds in oligopeptides. The protein is Peptidyl-prolyl cis-trans isomerase D (Cyp40) of Amanita muscaria (Fly agaric).